Reading from the N-terminus, the 120-residue chain is Large ribosomal subunit protein uL18 (120 aa).

It belongs to the universal ribosomal protein uL18 family. In terms of assembly, part of the 50S ribosomal subunit; part of the 5S rRNA/L5/L18/L25 subcomplex. Contacts the 5S and 23S rRNAs.

Its function is as follows. This is one of the proteins that bind and probably mediate the attachment of the 5S RNA into the large ribosomal subunit, where it forms part of the central protuberance. The polypeptide is Large ribosomal subunit protein uL18 (Afipia carboxidovorans (strain ATCC 49405 / DSM 1227 / KCTC 32145 / OM5) (Oligotropha carboxidovorans)).